The primary structure comprises 196 residues: Holliday junction branch migration complex subunit RuvA (196 aa).

Residues 1 to 63 (MIASVRGEVI…EDSMTLYGFA (63 aa)) form a domain I region. The tract at residues 64–142 (DADARDLFGT…PVTTGAGVTA (79 aa)) is domain II. The flexible linker stretch occupies residues 143-151 (VGGHAVRGP). Positions 151-196 (PVVEALVGLGFAAKQAEEACDKVLAADPDATTSSALRAALSMLGKK) are domain III.

It belongs to the RuvA family. As to quaternary structure, homotetramer. Forms an RuvA(8)-RuvB(12)-Holliday junction (HJ) complex. HJ DNA is sandwiched between 2 RuvA tetramers; dsDNA enters through RuvA and exits via RuvB. An RuvB hexamer assembles on each DNA strand where it exits the tetramer. Each RuvB hexamer is contacted by two RuvA subunits (via domain III) on 2 adjacent RuvB subunits; this complex drives branch migration. In the full resolvosome a probable DNA-RuvA(4)-RuvB(12)-RuvC(2) complex forms which resolves the HJ.

The protein resides in the cytoplasm. In terms of biological role, the RuvA-RuvB-RuvC complex processes Holliday junction (HJ) DNA during genetic recombination and DNA repair, while the RuvA-RuvB complex plays an important role in the rescue of blocked DNA replication forks via replication fork reversal (RFR). RuvA specifically binds to HJ cruciform DNA, conferring on it an open structure. The RuvB hexamer acts as an ATP-dependent pump, pulling dsDNA into and through the RuvAB complex. HJ branch migration allows RuvC to scan DNA until it finds its consensus sequence, where it cleaves and resolves the cruciform DNA. This Mycobacterium sp. (strain JLS) protein is Holliday junction branch migration complex subunit RuvA.